A 490-amino-acid chain; its full sequence is MFSFDALLQAIARQTVLCVGDLMLDEFVYGEVSRISPEAPAPVIAVQRSETNIGGAGNVARNIAAIGARCIFVGLIGDDATGRFLESELGSESRIEPVLVCDGSRPTTRKVRFVSEHFSTHMLRADWETASPAAADIEQRLLDAILPQLARADIVLLSDYAKGVLTARVIRDTIDAAKKLGKRVIVDPKSANFAIYRGATLLTPNRKEFTAATRSAAATDDEIAAAAQDAMALAECEAMLVTKSEHGMTLVPRGGEPIHVPALPVKVRDVSGAGDTVAAVLAVVLASGANWATAMRAASAAAAVAVSKNGTAVVTPAELRRRILPHASLAAEEKIIGSDEELDERLKQWRREGLRVGFTNGCFDILHPGHVKVLTAARGACDRLIVGLNSDASVRRLKGESRPVQHERARAEVLAALEAVDLVAIFEEDTPLRLITRIEPSVLVKGGDYTREQVVGHEIVAAKGGDVLLVDVLPGFSTTSLVARAREGQS.

Residues M1–A330 form a ribokinase region. N205–E208 lines the ATP pocket. Residue D275 is part of the active site. The interval F358 to S490 is cytidylyltransferase.

This sequence in the N-terminal section; belongs to the carbohydrate kinase PfkB family. The protein in the C-terminal section; belongs to the cytidylyltransferase family. Homodimer.

It catalyses the reaction D-glycero-beta-D-manno-heptose 7-phosphate + ATP = D-glycero-beta-D-manno-heptose 1,7-bisphosphate + ADP + H(+). It carries out the reaction D-glycero-beta-D-manno-heptose 1-phosphate + ATP + H(+) = ADP-D-glycero-beta-D-manno-heptose + diphosphate. It functions in the pathway nucleotide-sugar biosynthesis; ADP-L-glycero-beta-D-manno-heptose biosynthesis; ADP-L-glycero-beta-D-manno-heptose from D-glycero-beta-D-manno-heptose 7-phosphate: step 1/4. Its pathway is nucleotide-sugar biosynthesis; ADP-L-glycero-beta-D-manno-heptose biosynthesis; ADP-L-glycero-beta-D-manno-heptose from D-glycero-beta-D-manno-heptose 7-phosphate: step 3/4. Its function is as follows. Catalyzes the phosphorylation of D-glycero-D-manno-heptose 7-phosphate at the C-1 position to selectively form D-glycero-beta-D-manno-heptose-1,7-bisphosphate. In terms of biological role, catalyzes the ADP transfer from ATP to D-glycero-beta-D-manno-heptose 1-phosphate, yielding ADP-D-glycero-beta-D-manno-heptose. This Rhodopseudomonas palustris (strain ATCC BAA-98 / CGA009) protein is Bifunctional protein HldE.